The chain runs to 133 residues: DNA-directed RNA polymerases I and III subunit RPAC2 (133 aa).

The residue at position 1 (methionine 1) is an N-acetylmethionine. Residues 1–22 (MEEDQELERKMSGVKTSMAEGE) form a disordered region.

This sequence belongs to the archaeal Rpo11/eukaryotic RPB11/RPC19 RNA polymerase subunit family. In terms of assembly, component of the RNA polymerase I and RNA polymerase III complexes consisting of at least 13 and 17 subunits, respectively. The transcriptionally active RNA polymerase III complex consists of a ten-subunit horseshoe-shaped catalytic core composed of POLR3A/RPC1, POLR3B/RPC2, POLR1C/RPAC1, POLR1D/RPAC2, POLR3K/RPC10, POLR2E/RPABC1, POLR2F/RPABC2, POLR2H/RPABC3, POLR2K/RPABC4 and POLR2L/RPABC5; a mobile stalk composed of two subunits POLR3H/RPC8 and CRCP/RPC9, protruding from the core and functioning primarily in transcription initiation; and additional subunits homologous to general transcription factors of the RNA polymerase II machinery, POLR3C/RPC3-POLR3F/RPC6-POLR3G/RPC7 heterotrimer required for transcription initiation and POLR3D/RPC4-POLR3E/RPC5 heterodimer involved in both transcription initiation and termination.

It is found in the nucleus. DNA-dependent RNA polymerase catalyzes the transcription of DNA into RNA using the four ribonucleoside triphosphates as substrates. Common component of RNA polymerases I and III which synthesize ribosomal RNA precursor pre-rRNA and short non-coding RNAs including 5S rRNA, snRNAs, tRNAs and miRNAs, respectively. This is DNA-directed RNA polymerases I and III subunit RPAC2 (POLR1D) from Bos taurus (Bovine).